The following is a 225-amino-acid chain: mRNA-decapping protein D10 (225 aa).

A Nudix hydrolase domain is found at 35–218; sequence AKYPLSVIGI…NVIKYIINAV (184 aa). The Nudix box motif lies at 116–137; it reads GKIKDLESITNCLVREIKEELN. Glu-122 serves as a coordination point for Mg(2+). Glu-131 serves as the catalytic Nucleophile. Glu-135 provides a ligand contact to Mn(2+). Residue Asp-157 coordinates Mg(2+).

Belongs to the Nudix hydrolase family. The cofactor is Mg(2+). Mn(2+) serves as cofactor.

In terms of biological role, decapping enzyme required for the removal of the 5'-end m7GpppN cap tethered to viral and host mRNAs to allow their decay in cells. May therefore accelerate viral and cellular mRNA turnover to eliminate competing host mRNAs and allow stage-specific synthesis of viral proteins. Acceleration of the turnover of cellular transcripts may even promote the shutoff of host protein synthesis. The sequence is that of mRNA-decapping protein D10 from Fowlpox virus (strain NVSL) (FPV).